The following is a 313-amino-acid chain: Ribosomal RNA small subunit methyltransferase H (313 aa).

Residues glycine 35–histidine 37, aspartate 55, phenylalanine 79, aspartate 100, and glutamine 107 contribute to the S-adenosyl-L-methionine site.

The protein belongs to the methyltransferase superfamily. RsmH family.

The protein resides in the cytoplasm. It catalyses the reaction cytidine(1402) in 16S rRNA + S-adenosyl-L-methionine = N(4)-methylcytidine(1402) in 16S rRNA + S-adenosyl-L-homocysteine + H(+). Specifically methylates the N4 position of cytidine in position 1402 (C1402) of 16S rRNA. The polypeptide is Ribosomal RNA small subunit methyltransferase H (Burkholderia multivorans (strain ATCC 17616 / 249)).